Here is a 398-residue protein sequence, read N- to C-terminus: Acetate kinase (398 aa).

N9 contacts Mg(2+). K16 is an ATP binding site. R93 contacts substrate. D150 acts as the Proton donor/acceptor in catalysis. ATP contacts are provided by residues 209 to 213, 284 to 286, and 329 to 333; these read HLGAG, DMR, and GIGEH. Residue E382 coordinates Mg(2+).

This sequence belongs to the acetokinase family. As to quaternary structure, homodimer. Mg(2+) is required as a cofactor. Mn(2+) serves as cofactor.

It localises to the cytoplasm. It carries out the reaction acetate + ATP = acetyl phosphate + ADP. It functions in the pathway metabolic intermediate biosynthesis; acetyl-CoA biosynthesis; acetyl-CoA from acetate: step 1/2. In terms of biological role, catalyzes the formation of acetyl phosphate from acetate and ATP. Can also catalyze the reverse reaction. The chain is Acetate kinase from Rhodopseudomonas palustris (strain TIE-1).